A 198-amino-acid polypeptide reads, in one-letter code: B9 domain-containing protein 1 (198 aa).

The region spanning 8–126 (FLLNVSGQIE…TIPMFVPESS (119 aa)) is the C2 B9-type domain.

Belongs to the B9D family. In terms of assembly, part of the tectonic-like complex (also named B9 complex).

Its subcellular location is the cytoplasm. It localises to the cytoskeleton. It is found in the cilium basal body. In terms of biological role, component of the tectonic-like complex, a complex localized at the transition zone of primary cilia and acting as a barrier that prevents diffusion of transmembrane proteins between the cilia and plasma membranes. Required for ciliogenesis and sonic hedgehog/SHH signaling. In Xenopus laevis (African clawed frog), this protein is B9 domain-containing protein 1 (b9d1).